Here is a 528-residue protein sequence, read N- to C-terminus: tRNA-2-methylthio-N(6)-dimethylallyladenosine synthase (528 aa).

One can recognise an MTTase N-terminal domain in the interval 19–134 (RTYEVRTYGC…LPTLLERARH (116 aa)). Residues Cys-28, Cys-63, Cys-97, Cys-171, Cys-175, and Cys-178 each contribute to the [4Fe-4S] cluster site. The 231-residue stretch at 157 to 387 (RDEIASGWVS…TALQERISHE (231 aa)) folds into the Radical SAM core domain. The region spanning 390–460 (QRVVGRTVEV…PFHLIADSVD (71 aa)) is the TRAM domain.

Belongs to the methylthiotransferase family. MiaB subfamily. In terms of assembly, monomer. It depends on [4Fe-4S] cluster as a cofactor.

The protein resides in the cytoplasm. The catalysed reaction is N(6)-dimethylallyladenosine(37) in tRNA + (sulfur carrier)-SH + AH2 + 2 S-adenosyl-L-methionine = 2-methylsulfanyl-N(6)-dimethylallyladenosine(37) in tRNA + (sulfur carrier)-H + 5'-deoxyadenosine + L-methionine + A + S-adenosyl-L-homocysteine + 2 H(+). In terms of biological role, catalyzes the methylthiolation of N6-(dimethylallyl)adenosine (i(6)A), leading to the formation of 2-methylthio-N6-(dimethylallyl)adenosine (ms(2)i(6)A) at position 37 in tRNAs that read codons beginning with uridine. The sequence is that of tRNA-2-methylthio-N(6)-dimethylallyladenosine synthase from Clavibacter michiganensis subsp. michiganensis (strain NCPPB 382).